The chain runs to 597 residues: Hydrogenase-1 large chain (597 aa).

Positions 76, 79, 576, and 579 each coordinate Ni(2+).

Belongs to the [NiFe]/[NiFeSe] hydrogenase large subunit family. As to quaternary structure, heterodimer of a large and a small subunit. It depends on Ni(2+) as a cofactor.

The protein resides in the cell membrane. The enzyme catalyses H2 + A = AH2. This is one of three E.coli hydrogenases synthesized in response to different physiological conditions. HYD1 is believed to have a role in hydrogen cycling during fermentative growth. The sequence is that of Hydrogenase-1 large chain (hyaB) from Escherichia coli (strain K12).